Reading from the N-terminus, the 161-residue chain is Sec-independent protein translocase protein TatB (161 aa).

A helical membrane pass occupies residues 2–22 (FNDIGALELVTLVVLAVLVFG). Positions 102 to 161 (DAVHGRDAESSSSGSSSGSSSAASGNGRVDMSKKPEKPEKPGKTDKPAADDRPPFDMDAT) are disordered. Positions 111–126 (SSSSGSSSGSSSAASG) are enriched in low complexity. Positions 131 to 161 (DMSKKPEKPEKPGKTDKPAADDRPPFDMDAT) are enriched in basic and acidic residues.

It belongs to the TatB family. The Tat system comprises two distinct complexes: a TatABC complex, containing multiple copies of TatA, TatB and TatC subunits, and a separate TatA complex, containing only TatA subunits. Substrates initially bind to the TatABC complex, which probably triggers association of the separate TatA complex to form the active translocon.

The protein resides in the cell membrane. Its function is as follows. Part of the twin-arginine translocation (Tat) system that transports large folded proteins containing a characteristic twin-arginine motif in their signal peptide across membranes. Together with TatC, TatB is part of a receptor directly interacting with Tat signal peptides. TatB may form an oligomeric binding site that transiently accommodates folded Tat precursor proteins before their translocation. The protein is Sec-independent protein translocase protein TatB of Streptomyces coelicolor (strain ATCC BAA-471 / A3(2) / M145).